The chain runs to 408 residues: Broad specificity amino-acid racemase (408 aa).

The signal sequence occupies residues 1–24 (MNFKKTLLSIAIASASLTPAFSYS). A disulfide bond links Cys71 and Cys97. Residue Lys75 is the Proton acceptor of the active site. Lys75 carries the N6-(pyridoxal phosphate)lysine modification. Arg174 contacts substrate. Tyr300 acts as the Proton acceptor in catalysis. Met348 contributes to the substrate binding site.

Belongs to the alanine racemase family. Bsr subfamily. The cofactor is pyridoxal 5'-phosphate.

Its subcellular location is the periplasm. The catalysed reaction is an L-alpha-amino acid = a D-alpha-amino acid. The enzyme catalyses L-lysine = D-lysine. It catalyses the reaction L-arginine = D-arginine. Its function is as follows. Amino-acid racemase able to utilize a broad range of substrates. The protein is Broad specificity amino-acid racemase (alr) of Vibrio vulnificus (strain CMCP6).